The primary structure comprises 141 residues: Large ribosomal subunit protein uL11 (141 aa).

Belongs to the universal ribosomal protein uL11 family. As to quaternary structure, part of the ribosomal stalk of the 50S ribosomal subunit. Interacts with L10 and the large rRNA to form the base of the stalk. L10 forms an elongated spine to which L12 dimers bind in a sequential fashion forming a multimeric L10(L12)X complex. In terms of processing, one or more lysine residues are methylated.

In terms of biological role, forms part of the ribosomal stalk which helps the ribosome interact with GTP-bound translation factors. This chain is Large ribosomal subunit protein uL11, found in Streptococcus sanguinis (strain SK36).